The sequence spans 489 residues: Mitochondrial-processing peptidase subunit beta (489 aa).

The transit peptide at 1–43 (MAAAAARVVLSSAARRRLWGFSESLLIRGAAGRSLYFGENRLR) directs the protein to the mitochondrion. Position 101 (His101) interacts with Zn(2+). Catalysis depends on Glu104, which acts as the Proton acceptor. Zn(2+)-binding residues include His105 and Glu181.

Belongs to the peptidase M16 family. As to quaternary structure, heterodimer of PMPCA (alpha) and PMPCB (beta) subunits, forming the mitochondrial processing protease (MPP) in which PMPCA is involved in substrate recognition and binding and PMPCB is the catalytic subunit. Zn(2+) is required as a cofactor.

It is found in the mitochondrion matrix. It catalyses the reaction Release of N-terminal transit peptides from precursor proteins imported into the mitochondrion, typically with Arg in position P2.. With respect to regulation, binding to PMPCA is required for catalytic activity. Its function is as follows. Catalytic subunit of the essential mitochondrial processing protease (MPP), which cleaves the mitochondrial sequence off newly imported precursors proteins. Preferentially, cleaves after an arginine at position P2. Required for PINK1 turnover by coupling PINK1 mitochondrial import and cleavage, which results in subsequent PINK1 proteolysis. This Homo sapiens (Human) protein is Mitochondrial-processing peptidase subunit beta (PMPCB).